We begin with the raw amino-acid sequence, 246 residues long: Cytochrome c oxidase subunit 2 (246 aa).

Transmembrane regions (helical) follow at residues 31-51 (HMMY…YVMM) and 72-92 (IMWT…SFML). Positions 175, 210, 212, 214, 218, and 221 each coordinate Cu cation. Glutamate 212 lines the Mg(2+) pocket.

The protein belongs to the cytochrome c oxidase subunit 2 family. Component of the cytochrome c oxidase (complex IV, CIV), a multisubunit enzyme composed of a catalytic core of 3 subunits and several supernumerary subunits. The complex exists as a monomer or a dimer and forms supercomplexes (SCs) in the inner mitochondrial membrane with ubiquinol-cytochrome c oxidoreductase (cytochrome b-c1 complex, complex III, CIII). Cu cation serves as cofactor.

It is found in the mitochondrion inner membrane. The enzyme catalyses 4 Fe(II)-[cytochrome c] + O2 + 8 H(+)(in) = 4 Fe(III)-[cytochrome c] + 2 H2O + 4 H(+)(out). In terms of biological role, component of the cytochrome c oxidase, the last enzyme in the mitochondrial electron transport chain which drives oxidative phosphorylation. The respiratory chain contains 3 multisubunit complexes succinate dehydrogenase (complex II, CII), ubiquinol-cytochrome c oxidoreductase (cytochrome b-c1 complex, complex III, CIII) and cytochrome c oxidase (complex IV, CIV), that cooperate to transfer electrons derived from NADH and succinate to molecular oxygen, creating an electrochemical gradient over the inner membrane that drives transmembrane transport and the ATP synthase. Cytochrome c oxidase is the component of the respiratory chain that catalyzes the reduction of oxygen to water. Electrons originating from reduced cytochrome c in the intermembrane space (IMS) are transferred via the dinuclear copper A center (CU(A)) of subunit 2 and heme A of subunit 1 to the active site in subunit 1, a binuclear center (BNC) formed by heme A3 and copper B (CU(B)). The BNC reduces molecular oxygen to 2 water molecules using 4 electrons from cytochrome c in the IMS and 4 protons from the mitochondrial matrix. The sequence is that of Cytochrome c oxidase subunit 2 (COX2) from Debaryomyces hansenii (strain ATCC 36239 / CBS 767 / BCRC 21394 / JCM 1990 / NBRC 0083 / IGC 2968) (Yeast).